Reading from the N-terminus, the 102-residue chain is Circadian clock oscillator protein KaiA (102 aa).

One can recognise a KaiA C-terminal domain in the interval 1-102 (MTQEVDQQIL…CEAYRGAIFK (102 aa)).

The protein belongs to the KaiA family. In terms of assembly, homodimer. The KaiABC complex composition changes during the circadian cycle to control KaiC phosphorylation. Complexes KaiC(6), KaiA(2-4):KaiC(6), KaiB(6):KaiC(6) and KaiC(6):KaiB(6):KaiA(12) are among the most important forms, many form cooperatively. KaiA and CikA bind to the same region of the KaiB(fs) form and therefore compete.

In terms of biological role, key component of the KaiABC oscillator complex, which constitutes the main circadian regulator in cyanobacteria. Complex composition changes during the circadian cycle to control KaiC phosphorylation. KaiA stimulates KaiC autophosphorylation, while KaiB sequesters KaiA, leading to KaiC autodephosphorylation. KaiA binding to the KaiC CII domain during the subjective day yields KaiA(2-4):KaiC(6) complexes which stimulate KaiC autophosphorylation. Phospho-Ser-431 KaiC accumulation triggers binding of KaiB during the subjective night to form the KaiB(6):KaiC(6) complex, leading to changes in the output regulators CikA and SasA. KaiB(6):KaiC(6) formation exposes a site for KaiA binding on KaiB that sequesters KaiA from KaiC's CII domain, making the KaiC(6):KaiB(6):KaiA(12) complex resulting in KaiC autodephosphorylation. Complete dephosphorylation of KaiC leads to dissociation of KaiA(2):KaiB(1), completing 1 cycle of the Kai oscillator. This chain is Circadian clock oscillator protein KaiA, found in Nostoc sp. (strain PCC 7120 / SAG 25.82 / UTEX 2576).